Consider the following 557-residue polypeptide: Urocanate hydratase (557 aa).

A disordered region spans residues 1 to 20 (MSNPRHNEREVRSPRGDELN). Residues 52–53 (GG), glutamine 130, 176–178 (GMG), glutamate 196, arginine 201, 242–243 (NA), 263–267 (QTSAH), 273–274 (YL), and tyrosine 322 contribute to the NAD(+) site. The active site involves cysteine 410. An NAD(+)-binding site is contributed by glycine 492.

It belongs to the urocanase family. The cofactor is NAD(+).

It is found in the cytoplasm. It carries out the reaction 4-imidazolone-5-propanoate = trans-urocanate + H2O. It participates in amino-acid degradation; L-histidine degradation into L-glutamate; N-formimidoyl-L-glutamate from L-histidine: step 2/3. Its function is as follows. Catalyzes the conversion of urocanate to 4-imidazolone-5-propionate. The sequence is that of Urocanate hydratase from Brucella melitensis biotype 1 (strain ATCC 23456 / CCUG 17765 / NCTC 10094 / 16M).